The sequence spans 190 residues: Somatotropin (190 aa).

The signal sequence occupies residues 1 to 17 (MNRVILLLSVMCVGVSS). 2 disulfide bridges follow: Cys69/Cys163 and Cys180/Cys188.

This sequence belongs to the somatotropin/prolactin family.

It is found in the secreted. In terms of biological role, growth hormone plays an important role in growth control and is involved in the regulation of several anabolic processes. Implicated as an osmoregulatory substance important for seawater adaptation. This Paralichthys olivaceus (Bastard halibut) protein is Somatotropin (gh).